A 198-amino-acid polypeptide reads, in one-letter code: LexA repressor (198 aa).

Positions 28-47 form a DNA-binding region, H-T-H motif; the sequence is IRDIAKHFKLTPRGAHIHVL. Catalysis depends on for autocatalytic cleavage activity residues Ser-120 and Lys-157.

Belongs to the peptidase S24 family. In terms of assembly, homodimer.

The catalysed reaction is Hydrolysis of Ala-|-Gly bond in repressor LexA.. Represses a number of genes involved in the response to DNA damage (SOS response), including recA and lexA. In the presence of single-stranded DNA, RecA interacts with LexA causing an autocatalytic cleavage which disrupts the DNA-binding part of LexA, leading to derepression of the SOS regulon and eventually DNA repair. The polypeptide is LexA repressor (Thermosipho africanus (strain TCF52B)).